The primary structure comprises 94 residues: Neutrophil defensin 3 (94 aa).

Residues Met-1 to Ala-19 form the signal peptide. A propeptide spanning residues Glu-20–Ala-38 is cleaved from the precursor. 3 disulfides stabilise this stretch: Cys-66/Cys-94, Cys-68/Cys-83, and Cys-73/Cys-93.

The protein belongs to the alpha-defensin family. In terms of assembly, dimer. (Microbial infection) Interacts with herpes virus 1 HHV-1 envelope glycoprotein B; this interaction inhibits viral infection.

The protein resides in the secreted. Effector molecule of the innate immune system that acts via antibiotic-like properties against a broad array of infectious agents including bacteria, fungi, and viruses. Possesses the ability to neutralize bacterial toxins such as B.anthracis lethal factor, Clostridium difficile cytotoxin B as well as leukocidin produced by Staphylococcus aureus. Also blocks herpes simplex virus infection by interacting with envelope glycoprotein B and thus preventing its binding to heparan sulfate, the receptor for attachment. This chain is Neutrophil defensin 3 (DEFA3), found in Homo sapiens (Human).